Reading from the N-terminus, the 1025-residue chain is DNA ligase 4 (1025 aa).

The disordered stretch occupies residues 1–36 (MMQPTPAPSSAPGSPQRTQAEPEMETPSYPQPPQNV). Residues Glu-289, Lys-291, Leu-292, Arg-296, Glu-349, Phe-387, Glu-447, Lys-452, Lys-469, and Lys-471 each contribute to the ATP site. The N6-AMP-lysine intermediate role is filled by Lys-291. Glu-349 provides a ligand contact to Mg(2+). Glu-447 is a Mg(2+) binding site. Positions 667-763 (VKTDIFNGMK…EPAPFKKKYF (97 aa)) constitute a BRCT 1 domain. Residues 773-904 (ADEYNEDDGE…TTPDVDGDVK (132 aa)) are disordered. Composition is skewed to acidic residues over residues 775-785 (EYNEDDGEEEG) and 806-816 (SETEDEDEEQA). Basic and acidic residues predominate over residues 817–838 (PEIKEEQDGELHEWLKVDDRKS). Over residues 845–870 (DEEDSVTEDDSDNADVADEEEPDLDD) the composition is skewed to acidic residues. Residues 891-904 (RHRETTPDVDGDVK) show a composition bias toward basic and acidic residues. Residues 915–1025 (DPDVIFKHLC…TLLDEEEFAP (111 aa)) form the BRCT 2 domain.

This sequence belongs to the ATP-dependent DNA ligase family. It depends on Mg(2+) as a cofactor.

Its subcellular location is the nucleus. It catalyses the reaction ATP + (deoxyribonucleotide)n-3'-hydroxyl + 5'-phospho-(deoxyribonucleotide)m = (deoxyribonucleotide)n+m + AMP + diphosphate.. Its function is as follows. DNA ligase involved in DNA non-homologous end joining (NHEJ); required for double-strand break (DSB) repair. This chain is DNA ligase 4 (LIG4), found in Coprinopsis cinerea (Inky cap fungus).